The sequence spans 39 residues: Omega-theraphotoxin-Bs1b (39 aa).

3 cysteine pairs are disulfide-bonded: Cys-4/Cys-25, Cys-8/Cys-31, and Cys-17/Cys-36.

The protein belongs to the neurotoxin 12 (Hwtx-2) family. 06 (TXP1) subfamily. Expressed by the venom gland.

It is found in the secreted. Its function is as follows. Inhibits voltage-gated calcium channels (Cav) in rat cerebellar granule cells. Has insecticidal activity. This is Omega-theraphotoxin-Bs1b from Brachypelma smithi (Mexican red knee tarantula).